The sequence spans 238 residues: Demethylmenaquinone methyltransferase (238 aa).

S-adenosyl-L-methionine contacts are provided by residues Thr65, Asp85, and 109–110 (DA).

Belongs to the class I-like SAM-binding methyltransferase superfamily. MenG/UbiE family.

It catalyses the reaction a 2-demethylmenaquinol + S-adenosyl-L-methionine = a menaquinol + S-adenosyl-L-homocysteine + H(+). It participates in quinol/quinone metabolism; menaquinone biosynthesis; menaquinol from 1,4-dihydroxy-2-naphthoate: step 2/2. Its function is as follows. Methyltransferase required for the conversion of demethylmenaquinol (DMKH2) to menaquinol (MKH2). This chain is Demethylmenaquinone methyltransferase, found in Roseiflexus castenholzii (strain DSM 13941 / HLO8).